The sequence spans 519 residues: Anthranilate synthase component 1 (519 aa).

Residues Ser-39 and 290–292 (PYM) each bind L-tryptophan. Chorismate is bound at residue 327–328 (GT). Glu-360 serves as a coordination point for Mg(2+). Residues Tyr-448, Arg-468, 482–484 (GAG), and Gly-484 contribute to the chorismate site. Glu-497 contributes to the Mg(2+) binding site.

It belongs to the anthranilate synthase component I family. In terms of assembly, heterotetramer consisting of two non-identical subunits: a beta subunit (TrpG) and a large alpha subunit (TrpE). Requires Mg(2+) as cofactor.

It carries out the reaction chorismate + L-glutamine = anthranilate + pyruvate + L-glutamate + H(+). Its pathway is amino-acid biosynthesis; L-tryptophan biosynthesis; L-tryptophan from chorismate: step 1/5. Feedback inhibited by tryptophan. Its function is as follows. Part of a heterotetrameric complex that catalyzes the two-step biosynthesis of anthranilate, an intermediate in the biosynthesis of L-tryptophan. In the first step, the glutamine-binding beta subunit (TrpG) of anthranilate synthase (AS) provides the glutamine amidotransferase activity which generates ammonia as a substrate that, along with chorismate, is used in the second step, catalyzed by the large alpha subunit of AS (TrpE) to produce anthranilate. In the absence of TrpG, TrpE can synthesize anthranilate directly from chorismate and high concentrations of ammonia. The chain is Anthranilate synthase component 1 (trpE) from Serratia marcescens.